A 189-amino-acid polypeptide reads, in one-letter code: GTP cyclohydrolase 1 (189 aa).

Cysteine 78, histidine 81, and cysteine 150 together coordinate Zn(2+).

The protein belongs to the GTP cyclohydrolase I family. As to quaternary structure, homomer.

The catalysed reaction is GTP + H2O = 7,8-dihydroneopterin 3'-triphosphate + formate + H(+). It participates in cofactor biosynthesis; 7,8-dihydroneopterin triphosphate biosynthesis; 7,8-dihydroneopterin triphosphate from GTP: step 1/1. The protein is GTP cyclohydrolase 1 of Bacillus cytotoxicus (strain DSM 22905 / CIP 110041 / 391-98 / NVH 391-98).